Here is a 147-residue protein sequence, read N- to C-terminus: MLLVGSGAKFVQQLEQCGALAIFVTPEGGSEGHYLRRLRGAGYEVVTLSSKGIGDLASYLTSSHGVRPATLGKSQRRTYFYPSLIEQYRATLPPKAKGLVFWFYEGHVLSRQELSYLVKLSQEDKGVKFVVELGRERSIRWQPLQSA.

Belongs to the complex I NdhN subunit family. NDH-1 can be composed of about 15 different subunits; different subcomplexes with different compositions have been identified which probably have different functions.

It is found in the cellular thylakoid membrane. The enzyme catalyses a plastoquinone + NADH + (n+1) H(+)(in) = a plastoquinol + NAD(+) + n H(+)(out). It carries out the reaction a plastoquinone + NADPH + (n+1) H(+)(in) = a plastoquinol + NADP(+) + n H(+)(out). Its function is as follows. NDH-1 shuttles electrons from an unknown electron donor, via FMN and iron-sulfur (Fe-S) centers, to quinones in the respiratory and/or the photosynthetic chain. The immediate electron acceptor for the enzyme in this species is believed to be plastoquinone. Couples the redox reaction to proton translocation, and thus conserves the redox energy in a proton gradient. Cyanobacterial NDH-1 also plays a role in inorganic carbon-concentration. This chain is NAD(P)H-quinone oxidoreductase subunit N, found in Synechococcus sp. (strain JA-3-3Ab) (Cyanobacteria bacterium Yellowstone A-Prime).